Here is a 455-residue protein sequence, read N- to C-terminus: Ribulose bisphosphate carboxylase large chain (455 aa).

Residue lysine 5 is modified to N6,N6,N6-trimethyllysine. Substrate contacts are provided by asparagine 114 and threonine 164. Lysine 166 serves as the catalytic Proton acceptor. A substrate-binding site is contributed by lysine 168. Mg(2+)-binding residues include lysine 192, aspartate 194, and glutamate 195. Lysine 192 is subject to N6-carboxylysine. Histidine 285 (proton acceptor) is an active-site residue. Substrate-binding residues include arginine 286, histidine 318, and serine 370.

Belongs to the RuBisCO large chain family. Type I subfamily. As to quaternary structure, heterohexadecamer of 8 large chains and 8 small chains; disulfide-linked. The disulfide link is formed within the large subunit homodimers. It depends on Mg(2+) as a cofactor. The disulfide bond which can form in the large chain dimeric partners within the hexadecamer appears to be associated with oxidative stress and protein turnover.

Its subcellular location is the plastid. It is found in the chloroplast. The catalysed reaction is 2 (2R)-3-phosphoglycerate + 2 H(+) = D-ribulose 1,5-bisphosphate + CO2 + H2O. It catalyses the reaction D-ribulose 1,5-bisphosphate + O2 = 2-phosphoglycolate + (2R)-3-phosphoglycerate + 2 H(+). Its function is as follows. RuBisCO catalyzes two reactions: the carboxylation of D-ribulose 1,5-bisphosphate, the primary event in carbon dioxide fixation, as well as the oxidative fragmentation of the pentose substrate in the photorespiration process. Both reactions occur simultaneously and in competition at the same active site. The chain is Ribulose bisphosphate carboxylase large chain from Vachellia farnesiana (Sweet acacia).